A 98-amino-acid polypeptide reads, in one-letter code: Large ribosomal subunit protein eL21 (98 aa).

A disordered region spans residues 1 to 22 (MVQMSEGFRRKTRKKLSKHPRE). Over residues 10–21 (RKTRKKLSKHPR) the composition is skewed to basic residues.

It belongs to the eukaryotic ribosomal protein eL21 family.

This Methanocaldococcus jannaschii (strain ATCC 43067 / DSM 2661 / JAL-1 / JCM 10045 / NBRC 100440) (Methanococcus jannaschii) protein is Large ribosomal subunit protein eL21 (rpl21e).